Reading from the N-terminus, the 673-residue chain is Sodium/myo-inositol cotransporter 2 (673 aa).

Topologically, residues 1–27 are extracellular; the sequence is MESATISPQPPQSDSLEAFPQKSMEPA. The chain crosses the membrane as a helical span at residues 28–48; the sequence is DIAVLVLYFLFVLAVGLWSTV. Residues 49-65 lie on the Cytoplasmic side of the membrane; the sequence is RTKRDTVKGYFLAGGDM. A helical membrane pass occupies residues 66-88; the sequence is VWWPVGASLFASNVGSGHFIGLA. The Extracellular portion of the chain corresponds to 89–102; it reads GSGAAVGISVAAYE. Residues 103–123 traverse the membrane as a helical segment; it reads LNGLFSVLMLAWVFLPIYIAG. At 124-148 the chain is on the cytoplasmic side; the sequence is QVTTMPEYLRRRFGGNRISITLAVL. The helical transmembrane segment at 149–169 threads the bilayer; the sequence is YLFIYIFTKISVDMYAGAIFI. Topologically, residues 170–180 are extracellular; the sequence is QQSLHLDLYLA. The helical transmembrane segment at 181–201 threads the bilayer; sequence IVGLLAITALYTVAGGLAAVI. At 202-208 the chain is on the cytoplasmic side; sequence YTDALQT. A helical transmembrane segment spans residues 209–229; it reads VIMLIGAFILMGYSFAAVGGM. Over 230–272 the chain is Extracellular; the sequence is EGLKDQYFLALASNRSENSSCGLPREDAFHIFRDPLTSDLPWP. The helical transmembrane segment at 273–293 threads the bilayer; sequence GILFGMSIPSLWYWCTDQVIV. The Cytoplasmic portion of the chain corresponds to 294 to 308; that stretch reads QRSLAAKNLSHAKGG. A helical transmembrane segment spans residues 309-329; that stretch reads SLMAAYLKVLPLFLMVFPGMV. Over 330-375 the chain is Extracellular; that stretch reads SRVLFPDQVACAHPDICQRVCSNPSGCSDIAYPKLVLELLPTGLRG. Residues 376–396 traverse the membrane as a helical segment; the sequence is LMMAVMVAALMSSLTSIFNSA. The Cytoplasmic segment spans residues 397 to 418; the sequence is STIFTMDLWNHIRPRASERELM. Residues 419 to 439 traverse the membrane as a helical segment; that stretch reads IVGRIFVFALVLVSILWIPIV. Topologically, residues 440 to 446 are extracellular; that stretch reads QASQGGQ. Residues 447 to 467 traverse the membrane as a helical segment; it reads LFIYIQSISSYLQPPVAMVFI. The Cytoplasmic portion of the chain corresponds to 468 to 479; the sequence is MGCFWKRTNEKG. A helical transmembrane segment spans residues 480–500; it reads AFSGLILGLLLGLVRLILDFV. Over 501 to 521 the chain is Extracellular; sequence YAQPRCDQPDDRPAVVKDVHY. The helical transmembrane segment at 522–542 threads the bilayer; that stretch reads LYFSMILSFTTLITVVTVSWF. Topologically, residues 543-652 are cytoplasmic; sequence TETPSKEMVS…SLEENPLVKT (110 aa). A helical transmembrane segment spans residues 653–673; it reads LLDVNCIVCISCAIFLWGYFA.

It belongs to the sodium:solute symporter (SSF) (TC 2.A.21) family.

The protein localises to the membrane. Its subcellular location is the apical cell membrane. The enzyme catalyses myo-inositol(out) + 2 Na(+)(out) = myo-inositol(in) + 2 Na(+)(in). It catalyses the reaction 1D-chiro-inositol(out) + 2 Na(+)(out) = 1D-chiro-inositol(in) + 2 Na(+)(in). It carries out the reaction D-glucose(out) + 2 Na(+)(out) = D-glucose(in) + 2 Na(+)(in). The catalysed reaction is D-xylose(out) + 2 Na(+)(out) = D-xylose(in) + 2 Na(+)(in). MI transport activity inhibited by D-chiro-inositol (DCI), phlorizin (Pz) and sodium (Na(+)). Insulin increases D-chiro-inositol uptake. Its function is as follows. Involved in the sodium-dependent cotransport of myo-inositol (MI) with a Na(+):MI stoichiometry of 2:1. Exclusively responsible for apical MI transport and absorption in intestine. Can also transport D-chiro-inositol (DCI) but not L-fucose. Exhibits stereospecific cotransport of both D-glucose and D-xylose. May induce apoptosis through the TNF-alpha, PDCD1 pathway. May play a role in the regulation of MI concentration in serum, involving reabsorption in at least the proximal tubule of the kidney. In Mus musculus (Mouse), this protein is Sodium/myo-inositol cotransporter 2.